We begin with the raw amino-acid sequence, 429 residues long: Phosphomethylpyrimidine synthase (429 aa).

Substrate is bound by residues N66, M95, Y124, H163, 185 to 187, 226 to 229, and E265; these read SRG and DGLR. H269 is a binding site for Zn(2+). Y292 provides a ligand contact to substrate. H333 is a Zn(2+) binding site. Positions 407, 410, and 414 each coordinate [4Fe-4S] cluster.

The protein belongs to the ThiC family. The cofactor is [4Fe-4S] cluster.

It carries out the reaction 5-amino-1-(5-phospho-beta-D-ribosyl)imidazole + S-adenosyl-L-methionine = 4-amino-2-methyl-5-(phosphooxymethyl)pyrimidine + CO + 5'-deoxyadenosine + formate + L-methionine + 3 H(+). Its pathway is cofactor biosynthesis; thiamine diphosphate biosynthesis. Functionally, catalyzes the synthesis of the hydroxymethylpyrimidine phosphate (HMP-P) moiety of thiamine from aminoimidazole ribotide (AIR) in a radical S-adenosyl-L-methionine (SAM)-dependent reaction. The polypeptide is Phosphomethylpyrimidine synthase (Pyrococcus furiosus (strain ATCC 43587 / DSM 3638 / JCM 8422 / Vc1)).